The chain runs to 200 residues: Ciliary neurotrophic factor (200 aa).

The protein belongs to the CNTF family. As to expression, nervous system.

It localises to the cytoplasm. Functionally, CNTF is a survival factor for various neuronal cell types. Seems to prevent the degeneration of motor axons after axotomy. This Rattus norvegicus (Rat) protein is Ciliary neurotrophic factor (Cntf).